The chain runs to 603 residues: UvrABC system protein C (603 aa).

Positions 15 to 92 (DQPGCYLMKD…IKKHDPRFNI (78 aa)) constitute a GIY-YIG domain. Positions 197–232 (KTVKNDLMKKMQEAAENMEFEKAGEFRDQINAIETT) constitute a UVR domain.

It belongs to the UvrC family. As to quaternary structure, interacts with UvrB in an incision complex.

It is found in the cytoplasm. Functionally, the UvrABC repair system catalyzes the recognition and processing of DNA lesions. UvrC both incises the 5' and 3' sides of the lesion. The N-terminal half is responsible for the 3' incision and the C-terminal half is responsible for the 5' incision. The protein is UvrABC system protein C of Listeria monocytogenes serotype 4a (strain HCC23).